Reading from the N-terminus, the 481-residue chain is 4-hydroxyphenylacetate 3-monooxygenase oxygenase component (481 aa).

Substrate is bound by residues 100–104 (RSPDY) and His142. Residues 142 to 144 (HAL), 148 to 151 (QVNR), and Thr185 contribute to the FAD site. A substrate-binding site is contributed by 197 to 198 (ST). FAD is bound at residue 444 to 447 (DPVR).

The protein belongs to the FADH(2)-utilizing monooxygenase family. As to quaternary structure, homotetramer consisting of a dimer of dimers. 4-HPA 3-monooxygenase consists of a reductase component HpaC and an oxygenase component HpaB.

It carries out the reaction 4-hydroxyphenylacetate + FADH2 + O2 = 3,4-dihydroxyphenylacetate + FAD + H2O + H(+). It functions in the pathway aromatic compound metabolism; 4-hydroxyphenylacetate degradation; pyruvate and succinate semialdehyde from 4-hydroxyphenylacetate: step 1/7. Functionally, utilizes FADH(2) supplied by HpaC, to catalyze the hydroxylation of 4-hydroxyphenylacetic acid, leading to the production of 3,4-dihydroxyphenylacetic acid (DHPA). This chain is 4-hydroxyphenylacetate 3-monooxygenase oxygenase component, found in Thermus thermophilus (strain ATCC 27634 / DSM 579 / HB8).